The following is a 1054-amino-acid chain: Trehalose synthase complex regulatory subunit TPS3 (1054 aa).

A disordered region spans residues 112–133; the sequence is AANSGIPPANNPVSSGSTAQRP. Polar residues predominate over residues 122-132; that stretch reads NPVSSGSTAQR. Serine 148, serine 150, and serine 181 each carry phosphoserine. Disordered stretches follow at residues 155-203 and 223-250; these read ASSI…PVSK and QQQA…SSSN. Polar residues predominate over residues 170–182; that stretch reads LSSSLMKNPNLSF. A compositionally biased stretch (low complexity) spans 235–249; that stretch reads SGSTAGDSSIASSSS. Phosphothreonine is present on threonine 265. A phosphoserine mark is found at serine 267 and serine 273. Residues 287 to 778 are glycosyltransferase; sequence KFGGYSNNAK…SNQETSTVFN (492 aa). Serine 960 is subject to Phosphoserine.

This sequence in the N-terminal section; belongs to the glycosyltransferase 20 family. As to quaternary structure, the trehalose synthase complex is composed of the two catalytic subunits TPS1 and TPS2 and at least one of the two regulatory subunits TPS3 or TSL1.

The protein resides in the cytoplasm. Its function is as follows. Regulatory subunit of the trehalose synthase complex that catalyzes the production of trehalose from glucose-6-phosphate and UDP-glucose in a two step process. May stabilize the trehalose synthase complex. The protein is Trehalose synthase complex regulatory subunit TPS3 (TPS3) of Saccharomyces cerevisiae (strain ATCC 204508 / S288c) (Baker's yeast).